The sequence spans 240 residues: UDP-2,3-diacylglucosamine hydrolase (240 aa).

Residues Asp-8, His-10, Asp-41, Asn-78, and His-113 each coordinate Mn(2+). Substrate is bound at residue 78-79 (NR). Residues Asp-121, Ser-159, Asn-163, Lys-166, and His-194 each contribute to the substrate site. Mn(2+) is bound by residues His-194 and His-196.

It belongs to the LpxH family. Requires Mn(2+) as cofactor.

It localises to the cell inner membrane. The enzyme catalyses UDP-2-N,3-O-bis[(3R)-3-hydroxytetradecanoyl]-alpha-D-glucosamine + H2O = 2-N,3-O-bis[(3R)-3-hydroxytetradecanoyl]-alpha-D-glucosaminyl 1-phosphate + UMP + 2 H(+). The protein operates within glycolipid biosynthesis; lipid IV(A) biosynthesis; lipid IV(A) from (3R)-3-hydroxytetradecanoyl-[acyl-carrier-protein] and UDP-N-acetyl-alpha-D-glucosamine: step 4/6. In terms of biological role, hydrolyzes the pyrophosphate bond of UDP-2,3-diacylglucosamine to yield 2,3-diacylglucosamine 1-phosphate (lipid X) and UMP by catalyzing the attack of water at the alpha-P atom. Involved in the biosynthesis of lipid A, a phosphorylated glycolipid that anchors the lipopolysaccharide to the outer membrane of the cell. This Shewanella baltica (strain OS195) protein is UDP-2,3-diacylglucosamine hydrolase.